The primary structure comprises 320 residues: Mitochondrial thiamine pyrophosphate carrier (320 aa).

Solcar repeat units follow at residues 13-106, 116-202, and 214-309; these read NTKF…LTEL, REFS…LKHL, and NENL…FCNV. Residues 19–39 form a helical membrane-spanning segment; sequence AVAGSVSGLVTRALISPFDVI. Ser51 bears the Phosphoserine mark. Transmembrane regions (helical) follow at residues 87 to 107, 122 to 142, 173 to 193, and 220 to 240; these read ILSIGYGAVQFLSFEMLTELV, FVCGGLAACMATLTVHPVDVL, VFYKGLAPTLIAIFPYAGLQF, and LLCGSGAGVISKTLTYPLDLF. Residues 241–246 carry the Substrate recognition motif; sequence KKRLQV. Residues 293-313 traverse the membrane as a helical segment; the sequence is ALSTGFMFFWYEFFCNVFHCM.

Belongs to the mitochondrial carrier (TC 2.A.29) family.

Its subcellular location is the mitochondrion membrane. It carries out the reaction thiamine phosphate(out) + thiamine diphosphate(in) = thiamine phosphate(in) + thiamine diphosphate(out). Mitochondrial transporter mediating uptake of thiamine diphosphate into mitochondria. It is not clear if the antiporter activity is affected by the membrane potential or by the proton electrochemical gradient. This is Mitochondrial thiamine pyrophosphate carrier (SLC25A19) from Pongo abelii (Sumatran orangutan).